The sequence spans 368 residues: Proline-rich protein 5-like (368 aa).

Ser-28 carries the phosphoserine modification. The disordered stretch occupies residues 327–368 (PSFPPPHRQCSSEPNITDNPDGLEEGARGSQEGSELNCASLS). 2 stretches are compositionally biased toward polar residues: residues 335–344 (QCSSEPNITD) and 357–368 (QEGSELNCASLS).

This sequence belongs to the PROTOR family. As to quaternary structure, interacts with the mammalian target of rapamycin complex 2 (mTORC2) which contains MTOR, MLST8, PRR5, RICTOR, MAPKAP1 and DEPTOR. Interacts with RFFL. Interacts (via C-terminus) with ZFP36 (via C-terminus); this interaction may accelerate ZFP36-mediated mRNA decay during stress. Interacts with RICTOR. Ubiquitinated. Ubiquitination by RFFL promotes proteasomal degradation of PRR5L thereby modifying the substrate-specific activity of the mTORC2 complex. Ubiquitination by RFFL is stimulated by LPA/lysophosphatidic acid.

In terms of biological role, associates with the mTORC2 complex that regulates cellular processes including survival and organization of the cytoskeleton. Regulates the activity of the mTORC2 complex in a substrate-specific manner preventing for instance the specific phosphorylation of PKCs and thereby controlling cell migration. Plays a role in the stimulation of ZFP36-mediated mRNA decay of several ZFP36-associated mRNAs, such as TNF-alpha and GM-CSF, in response to stress. Required for ZFP36 localization to cytoplasmic stress granule (SG) and P-body (PB) in response to stress. In Homo sapiens (Human), this protein is Proline-rich protein 5-like (PRR5L).